Here is a 433-residue protein sequence, read N- to C-terminus: Acetyl-CoA-benzylalcohol acetyltransferase (433 aa).

Residues H152 and D377 each act as proton acceptor in the active site.

The protein belongs to the plant acyltransferase family. Post-translationally, the N-terminus is blocked. Expressed in petals, style, sepals and stamens. Very low expression in stigma and not detected in leaves.

The catalysed reaction is benzyl alcohol + acetyl-CoA = benzyl acetate + CoA. It carries out the reaction (E)-cinnamyl alcohol + acetyl-CoA = (E)-cinnamyl acetate + CoA. Functionally, involved in the biosynthesis of benzyl acetate, a major constituent of the floral scent. Can use benzylalcohol, cinnamylalcohol, 3-cis-hexene-1-ol or heptanol as substrates. Has some activity with 2-phenylethanol and 2-naphtalene-ethanol, but no activity with linalool, 2-hydroxybenzylalcohol, 3-hydroxybenzylalcohol or 4-hydroxybenzylalcohol. The chain is Acetyl-CoA-benzylalcohol acetyltransferase (BEAT) from Clarkia breweri (Fairy fans).